A 261-amino-acid chain; its full sequence is tRNA pseudouridine synthase A (261 aa).

Asp51 functions as the Nucleophile in the catalytic mechanism. Residue Tyr109 coordinates substrate.

The protein belongs to the tRNA pseudouridine synthase TruA family. As to quaternary structure, homodimer.

It catalyses the reaction uridine(38/39/40) in tRNA = pseudouridine(38/39/40) in tRNA. Its function is as follows. Formation of pseudouridine at positions 38, 39 and 40 in the anticodon stem and loop of transfer RNAs. The chain is tRNA pseudouridine synthase A from Shewanella sp. (strain W3-18-1).